The primary structure comprises 394 residues: QWRF motif-containing protein 7 (394 aa).

The disordered stretch occupies residues 1-171 (MATTGRRLRP…ESPVSKAKIR (171 aa)). Low complexity predominate over residues 14–67 (NNNRSRTISSSISLPVSLNASLSSSTSSSSSSSPSNSSKRVMITRSQSTTRSSR). The span at 85–96 (NSASRSQEINNG) shows a compositional bias: polar residues. Residues 97–110 (RSRESFARYLEQRT) show a composition bias toward basic and acidic residues. Polar residues-rich tracts occupy residues 111–120 (RGSPRSNASS) and 142–157 (TMKTPLSSSAPTTSMC). Positions 211 to 214 (QWRF) match the QWRF motif motif.

The protein belongs to the QWRF family.

The protein is QWRF motif-containing protein 7 (QWRF7) of Arabidopsis thaliana (Mouse-ear cress).